The chain runs to 69 residues: uncharacterized protein (69 aa).

This is an uncharacterized protein from Sinorhizobium fredii (strain NBRC 101917 / NGR234).